We begin with the raw amino-acid sequence, 260 residues long: Winged helix repair factor 1 (260 aa).

Winged helix domain regions lie at residues 38–110 (FTED…MVVM), 126–185 (SRAT…LAVP), and 186–260 (GAGR…ISET).

The protein belongs to the STK19 family. Monomer in solution. Homodimer; when bound to DNA. Component of a transcription-coupled nucleotide excision repair (TC-NER) complex which assembles and interacts with the multiprotein RNA polymerase II complex when it stalls at DNA lesions.

It is found in the nucleus. Its function is as follows. DNA-binding protein which is required for efficient transcription-coupled nucleotide excision repair (TC-NER). Acts as part of a TC-NER complex which assembles and interacts with RNA polymerase II (RNAPII) when it stalls at DNA lesions. This Xenopus laevis (African clawed frog) protein is Winged helix repair factor 1.